The sequence spans 179 residues: UPF0227 protein Ssed_2836 (179 aa).

Belongs to the UPF0227 family.

The sequence is that of UPF0227 protein Ssed_2836 from Shewanella sediminis (strain HAW-EB3).